A 536-amino-acid polypeptide reads, in one-letter code: Copine-1 (536 aa).

2 consecutive C2 domains span residues Met1 to Leu113 and Gly122 to His244. 7 residues coordinate Ca(2+): Asp21, Asp27, Asp79, Asp81, Asp91, Asp152, and Asp158. At Lys170 the chain carries N6-acetyllysine. Positions 213, 215, and 221 each coordinate Ca(2+). The 203-residue stretch at Gln282–Pro484 folds into the VWFA domain.

Belongs to the copine family. As to quaternary structure, homodimer; homodimerizes via its C2 domains. Interacts with p65/RELA (via N-terminus); this interaction induces proteolytic cleavage of p65/RELA subunit and inhibition of NF-kappa-B transcriptional activity. Interacts (via VWFA domain) with ACTB, CCDC22, MYCBP2, PPP5C, RDX and UBE2O. It depends on Ca(2+) as a cofactor. Expressed in liver, brain, heart, intestine, kidney and lung (at protein level).

The protein localises to the nucleus. It is found in the cytoplasm. Its subcellular location is the cell membrane. In terms of biological role, calcium-dependent phospholipid-binding protein that plays a role in calcium-mediated intracellular processes. Involved in the TNF-alpha receptor signaling pathway in a calcium-dependent manner. Exhibits calcium-dependent phospholipid binding properties. Plays a role in neuronal progenitor cell differentiation; induces neurite outgrowth via a AKT-dependent signaling cascade and calcium-independent manner. May recruit target proteins to the cell membrane in a calcium-dependent manner. May function in membrane trafficking. Involved in TNF-alpha-induced NF-kappa-B transcriptional repression by inducing endoprotease processing of the transcription factor NF-kappa-B p65/RELA subunit. Also induces endoprotease processing of NF-kappa-B p50/NFKB1, p52/NFKB2, RELB and REL. The polypeptide is Copine-1 (Rattus norvegicus (Rat)).